The following is a 95-amino-acid chain: Leukocyte-specific transcript 1 protein (95 aa).

A helical membrane pass occupies residues 22-42 (LGLGGLLLLLVIILFICLCGF). Ser-64 is subject to Phosphoserine.

It belongs to the LST1 family. As to expression, expressed in spleen and at lower levels in thymus and liver.

It localises to the membrane. Possible role in modulating immune responses. Has an inhibitory effect on lymphocyte proliferation. Induces morphological changes including production of filopodia and microspikes when overexpressed in a variety of cell types and may be involved in dendritic cell maturation. This is Leukocyte-specific transcript 1 protein (Lst1) from Mus musculus (Mouse).